A 1032-amino-acid polypeptide reads, in one-letter code: Chitin synthase 8 (1032 aa).

Composition is skewed to pro residues over residues 1-11 (MRPGDIYPPPQ) and 26-41 (PPQP…PPQQ). Residues 1-220 (MRPGDIYPPP…DDDMNDSHPL (220 aa)) form a disordered region. Polar residues-rich tracts occupy residues 65–78 (MSPT…SRYN), 98–107 (LPTQSLSPFN), and 143–160 (TNPS…SYSY). A glycan (N-linked (GlcNAc...) asparagine) is linked at Asn-78. Over residues 176–188 (PHHSSQSSVSSIP) the composition is skewed to low complexity. N-linked (GlcNAc...) asparagine glycosylation is found at Asn-215, Asn-304, Asn-473, Asn-545, and Asn-691. 7 consecutive transmembrane segments (helical) span residues 728–748 (TLNM…FFVL), 762–782 (VNIP…LLSL), 796–816 (SMVG…FLAV), 842–862 (IVIS…MALE), 870–890 (FFQY…YAFC), 972–992 (VLLV…QASG), and 995–1015 (NSLA…LAFF).

This sequence belongs to the chitin synthase family.

The protein resides in the cell membrane. The enzyme catalyses [(1-&gt;4)-N-acetyl-beta-D-glucosaminyl](n) + UDP-N-acetyl-alpha-D-glucosamine = [(1-&gt;4)-N-acetyl-beta-D-glucosaminyl](n+1) + UDP + H(+). In terms of biological role, polymerizes chitin, a structural polymer of the cell wall and septum, by transferring the sugar moiety of UDP-GlcNAc to the non-reducing end of the growing chitin polymer. This Cryptococcus neoformans var. grubii serotype A (strain H99 / ATCC 208821 / CBS 10515 / FGSC 9487) (Filobasidiella neoformans var. grubii) protein is Chitin synthase 8.